Here is a 532-residue protein sequence, read N- to C-terminus: Nucleobase-ascorbate transporter 6 (532 aa).

Residues 1 to 24 form a disordered region; the sequence is MAGGGAPAPKADEPQPHPPKDQLP. Residues 10 to 20 show a composition bias toward basic and acidic residues; sequence KADEPQPHPPK. 12 helical membrane passes run 39–59, 75–95, 97–117, 137–157, 163–185, 192–212, 223–243, 289–309, 361–381, 392–414, 426–446, and 463–483; these read AILL…LIPT, VIQT…LFGT, LPAV…IILS, TQGA…SGLW, FLSP…EFGF, IEIG…LPHV, FAVI…TVGG, FAMM…FVAV, VGSR…SILG, APII…LSFL, FILG…NEYT, and DMVN…AFFL.

Belongs to the nucleobase:cation symporter-2 (NCS2) (TC 2.A.40) family. Expressed in the apical region of cotyledons 4 days after imbibition (DAI). Expressed in the whole vasculature at 12 DAI. Expressed in the root central cylinder and lateral root primordia. Expressed in the vasculature of sepals, filaments, carpels and developing siliques.

It is found in the membrane. The protein is Nucleobase-ascorbate transporter 6 (NAT6) of Arabidopsis thaliana (Mouse-ear cress).